Reading from the N-terminus, the 548-residue chain is MKKVTAMLFSMAVGLNAVSMAAKAKASEEQETDVLLIGGGIMSATLGTYLRELEPEWSMTMVERLEGVAQESSNGWNNAGTGHSALMELNYTPQNADGSISIEKAVAINEAFQISRQFWAHQVERGVLRTPRSFINTVPHMSFVWGEDNVNFLRARYAALQQSSLFRGMRYSEDHAQIKEWAPLVMEGRDPQQKVAATRTEMGTDVNYGEITRQLIASLQKKSNFSLQLSSEVRALKRNDDNTWTVTVADLKNGTAQNIRAKFVFIGAGGAALKLLQESGIPEAKDYAGFPVGGQFLVSENPDVVNHHLAKVYGKASVGAPPMSVPHIDTRVLDGKRVVLFGPFATFSTKFLKNGSLWDLMSSTTTSNVMPMMHVGLDNFDLVKYLVSQVMLSEEDRFEALKEYYPQAKKEDWRLWQAGQRVQIIKRDAEKGGVLRLGTEVVSDQQGTIAALLGASPGASTAAPIMLDLLEKVFGDRVSSPQWQATLKAIVPSYGRKLNGDVAATERELQYTSEVLGLKYDKPQAADSTPKPQLKPQPVQKEVADIAL.

A disordered region spans residues 521–548 (DKPQAADSTPKPQLKPQPVQKEVADIAL). The segment covering 530-541 (PKPQLKPQPVQK) has biased composition (low complexity).

This sequence belongs to the MQO family. FAD serves as cofactor.

The enzyme catalyses (S)-malate + a quinone = a quinol + oxaloacetate. It participates in carbohydrate metabolism; tricarboxylic acid cycle; oxaloacetate from (S)-malate (quinone route): step 1/1. The protein is Probable malate:quinone oxidoreductase of Escherichia coli (strain 55989 / EAEC).